We begin with the raw amino-acid sequence, 264 residues long: Apolipoprotein A-I (264 aa).

A signal peptide spans 1–18 (MKAVLLVVAALFLAGSQA). Repeat copies occupy residues 67–88 (LRLSDNWDTLSTILTKLQADFG) and 89–110 (LATQEFWDTLEKETEWLKQIVS). The interval 67–264 (LRLSDNWDTL…DQASKQLAAQ (198 aa)) is 10 X approximate tandem repeats. Residues 111 to 121 (EDLQDVKHKVQ) form a 3; half-length repeat. A run of 3 repeats spans residues 122–143 (PYLENFQKKVQEEVERYREKVR), 144–165 (PLGIELRDGARQKLQELQEKLT), and 166–187 (PLGEDLRDRTREHVDVLRTQLA). One copy of the 7; truncated repeat lies at 188 to 207 (PFSEEMRQRLAKRLEELKDS). The residue at position 193 (Met193) is a Methionine sulfoxide. Repeat unit 8 spans residues 208–229 (ATLADYHAKASEHLKMLGEKAK). The stretch at 230 to 240 (PALEDLRQGLL) is one 9; half-length repeat. The stretch at 241-264 (PVLENLKASILSSIDQASKQLAAQ) is repeat 10.

Belongs to the apolipoprotein A1/A4/E family. In terms of assembly, homodimer. Interacts with APOA1BP and CLU. Component of a sperm activating protein complex (SPAP), consisting of APOA1, an immunoglobulin heavy chain, an immunoglobulin light chain and albumin. Interacts with NDRG1. Interacts with SCGB3A2. Interacts with NAXE and YJEFN3. Post-translationally, glycosylated. Palmitoylated. In terms of processing, phosphorylation sites are present in the extracellular medium.

The protein resides in the secreted. Functionally, participates in the reverse transport of cholesterol from tissues to the liver for excretion by promoting cholesterol efflux from tissues and by acting as a cofactor for the lecithin cholesterol acyltransferase (LCAT). As part of the SPAP complex, activates spermatozoa motility. The chain is Apolipoprotein A-I (APOA1) from Cavia aperea (Brazilian guinea pig).